Reading from the N-terminus, the 346-residue chain is uncharacterized protein (346 aa).

The protein belongs to the PhyH family.

It is found in the cytoplasm. This is an uncharacterized protein from Saccharomyces cerevisiae (strain ATCC 204508 / S288c) (Baker's yeast).